We begin with the raw amino-acid sequence, 208 residues long: Large ribosomal subunit protein bL25 (208 aa).

Belongs to the bacterial ribosomal protein bL25 family. CTC subfamily. As to quaternary structure, part of the 50S ribosomal subunit; part of the 5S rRNA/L5/L18/L25 subcomplex. Contacts the 5S rRNA. Binds to the 5S rRNA independently of L5 and L18.

This is one of the proteins that binds to the 5S RNA in the ribosome where it forms part of the central protuberance. This chain is Large ribosomal subunit protein bL25, found in Leptothrix cholodnii (strain ATCC 51168 / LMG 8142 / SP-6) (Leptothrix discophora (strain SP-6)).